The following is a 364-amino-acid chain: Aminomethyltransferase (364 aa).

This sequence belongs to the GcvT family. As to quaternary structure, the glycine cleavage system is composed of four proteins: P, T, L and H.

The catalysed reaction is N(6)-[(R)-S(8)-aminomethyldihydrolipoyl]-L-lysyl-[protein] + (6S)-5,6,7,8-tetrahydrofolate = N(6)-[(R)-dihydrolipoyl]-L-lysyl-[protein] + (6R)-5,10-methylene-5,6,7,8-tetrahydrofolate + NH4(+). The glycine cleavage system catalyzes the degradation of glycine. The polypeptide is Aminomethyltransferase (Shewanella baltica (strain OS223)).